The sequence spans 480 residues: tRNA-2-methylthio-N(6)-dimethylallyladenosine synthase (480 aa).

An MTTase N-terminal domain is found at 29–145 (GSFWIQTFGC…LEALLTQVDN (117 aa)). [4Fe-4S] cluster-binding residues include cysteine 38, cysteine 74, cysteine 108, cysteine 180, cysteine 184, and cysteine 187. The Radical SAM core domain occupies 166-403 (RDSTICAWVN…NALVERIALQ (238 aa)). One can recognise a TRAM domain in the interval 406–474 (SRYSGKVEQV…AFSLSGTPCE (69 aa)).

Belongs to the methylthiotransferase family. MiaB subfamily. As to quaternary structure, monomer. Requires [4Fe-4S] cluster as cofactor.

It is found in the cytoplasm. It catalyses the reaction N(6)-dimethylallyladenosine(37) in tRNA + (sulfur carrier)-SH + AH2 + 2 S-adenosyl-L-methionine = 2-methylsulfanyl-N(6)-dimethylallyladenosine(37) in tRNA + (sulfur carrier)-H + 5'-deoxyadenosine + L-methionine + A + S-adenosyl-L-homocysteine + 2 H(+). Catalyzes the methylthiolation of N6-(dimethylallyl)adenosine (i(6)A), leading to the formation of 2-methylthio-N6-(dimethylallyl)adenosine (ms(2)i(6)A) at position 37 in tRNAs that read codons beginning with uridine. The polypeptide is tRNA-2-methylthio-N(6)-dimethylallyladenosine synthase (Prochlorococcus marinus (strain MIT 9313)).